Consider the following 271-residue polypeptide: Shikimate kinase (271 aa).

P83–A93 contributes to the ATP binding site.

This sequence belongs to the GHMP kinase family. Archaeal shikimate kinase subfamily.

The protein resides in the cytoplasm. The catalysed reaction is shikimate + ATP = 3-phosphoshikimate + ADP + H(+). Its pathway is metabolic intermediate biosynthesis; chorismate biosynthesis; chorismate from D-erythrose 4-phosphate and phosphoenolpyruvate: step 5/7. In Thermococcus kodakarensis (strain ATCC BAA-918 / JCM 12380 / KOD1) (Pyrococcus kodakaraensis (strain KOD1)), this protein is Shikimate kinase.